A 402-amino-acid chain; its full sequence is Nuclear hormone receptor family member nhr-96 (402 aa).

The segment at residues 4–79 is a DNA-binding region (nuclear receptor); the sequence is FGLCAVCGQV…VGMDVKKIQQ (76 aa). 2 consecutive NR C4-type zinc fingers follow at residues 7–27 and 44–67; these read CAVC…CRSC and CVKA…LKRC. The NR LBD domain occupies 154–402; the sequence is NYYNSLELLT…FSDPEMFELT (249 aa).

Belongs to the nuclear hormone receptor family.

It is found in the nucleus. Orphan nuclear receptor. This Caenorhabditis elegans protein is Nuclear hormone receptor family member nhr-96 (nhr-96).